A 158-amino-acid polypeptide reads, in one-letter code: Sec-independent protein translocase protein TatB (158 aa).

Residues 1-21 (MFGISFSELLLVGLVALLVLG) traverse the membrane as a helical segment. A disordered region spans residues 73–158 (DEARKMFAPN…HDSSLPPRAP (86 aa)). Positions 80 to 90 (APNQPSENSPE) are enriched in low complexity.

It belongs to the TatB family. As to quaternary structure, the Tat system comprises two distinct complexes: a TatABC complex, containing multiple copies of TatA, TatB and TatC subunits, and a separate TatA complex, containing only TatA subunits. Substrates initially bind to the TatABC complex, which probably triggers association of the separate TatA complex to form the active translocon.

Its subcellular location is the cell inner membrane. Its function is as follows. Part of the twin-arginine translocation (Tat) system that transports large folded proteins containing a characteristic twin-arginine motif in their signal peptide across membranes. Together with TatC, TatB is part of a receptor directly interacting with Tat signal peptides. TatB may form an oligomeric binding site that transiently accommodates folded Tat precursor proteins before their translocation. This is Sec-independent protein translocase protein TatB from Pseudomonas syringae pv. syringae (strain B728a).